The sequence spans 262 residues: Hydroxyethylthiazole kinase (262 aa).

Met43 provides a ligand contact to substrate. ATP is bound by residues Arg118 and Thr164. Ala191 lines the substrate pocket.

Belongs to the Thz kinase family. Requires Mg(2+) as cofactor.

It carries out the reaction 5-(2-hydroxyethyl)-4-methylthiazole + ATP = 4-methyl-5-(2-phosphooxyethyl)-thiazole + ADP + H(+). It functions in the pathway cofactor biosynthesis; thiamine diphosphate biosynthesis; 4-methyl-5-(2-phosphoethyl)-thiazole from 5-(2-hydroxyethyl)-4-methylthiazole: step 1/1. In terms of biological role, catalyzes the phosphorylation of the hydroxyl group of 4-methyl-5-beta-hydroxyethylthiazole (THZ). In Cereibacter sphaeroides (strain ATCC 17023 / DSM 158 / JCM 6121 / CCUG 31486 / LMG 2827 / NBRC 12203 / NCIMB 8253 / ATH 2.4.1.) (Rhodobacter sphaeroides), this protein is Hydroxyethylthiazole kinase.